The primary structure comprises 88 residues: Small ribosomal subunit protein bS20 (88 aa).

The disordered stretch occupies residues methionine 1 to methionine 27.

The protein belongs to the bacterial ribosomal protein bS20 family.

Functionally, binds directly to 16S ribosomal RNA. The chain is Small ribosomal subunit protein bS20 from Shewanella sediminis (strain HAW-EB3).